We begin with the raw amino-acid sequence, 237 residues long: Phosphoribosylaminoimidazole-succinocarboxamide synthase (237 aa).

This sequence belongs to the SAICAR synthetase family.

The catalysed reaction is 5-amino-1-(5-phospho-D-ribosyl)imidazole-4-carboxylate + L-aspartate + ATP = (2S)-2-[5-amino-1-(5-phospho-beta-D-ribosyl)imidazole-4-carboxamido]succinate + ADP + phosphate + 2 H(+). The protein operates within purine metabolism; IMP biosynthesis via de novo pathway; 5-amino-1-(5-phospho-D-ribosyl)imidazole-4-carboxamide from 5-amino-1-(5-phospho-D-ribosyl)imidazole-4-carboxylate: step 1/2. The protein is Phosphoribosylaminoimidazole-succinocarboxamide synthase of Escherichia coli O7:K1 (strain IAI39 / ExPEC).